Here is a 632-residue protein sequence, read N- to C-terminus: Phospholipid:diacylglycerol acyltransferase (632 aa).

Positions 1–15 are enriched in basic residues; that stretch reads MASSKKSKTHKKKKE. The interval 1 to 47 is disordered; it reads MASSKKSKTHKKKKEVKSPIDLPNSKKPTRALSEQPSASETQSVSNK. At 1 to 56 the chain is on the cytoplasmic side; sequence MASSKKSKTHKKKKEVKSPIDLPNSKKPTRALSEQPSASETQSVSNKSRKSKFGKR. Over residues 32–46 the composition is skewed to polar residues; sequence LSEQPSASETQSVSN. The chain crosses the membrane as a helical span at residues 57–77; sequence LNFILGAILGICGAFFFAVGD. Residues 78 to 632 are Lumenal-facing; it reads DNAVFDPATL…NEINLDKPRN (555 aa). Asp136 contributes to the substrate binding site. Ser293 functions as the Acyl-ester intermediate in the catalytic mechanism. Met294 is a binding site for substrate. Residues Asp535 and His586 each act as charge relay system in the active site.

Belongs to the AB hydrolase superfamily. Lipase family.

The protein localises to the endoplasmic reticulum membrane. The catalysed reaction is a glycerophospholipid + a 1,2-diacyl-sn-glycerol = a monoacylglycerophospholipid + a triacyl-sn-glycerol. It participates in glycerolipid metabolism; triacylglycerol biosynthesis. Catalyzes triacylglycerol (TAG) formation by an acyl-CoA independent pathway. The enzyme specifically transfers acyl groups from the sn-2 position of a phospholipid to diacylglycerol (DAG), thus forming an sn-1-lysophospholipid. Plays a major role in triacylglycerol formation at log phase. Involved in lipid particle synthesis from the endoplasmic reticulum, promoting localized TAG production at discrete ER subdomains. In Schizosaccharomyces pombe (strain 972 / ATCC 24843) (Fission yeast), this protein is Phospholipid:diacylglycerol acyltransferase (plh1).